The sequence spans 185 residues: Der GTPase-activating protein YihI (185 aa).

Disordered stretches follow at residues 1 to 74 (MGRS…KKKI) and 145 to 169 (EPED…SSDE). Positions 23–33 (NRSESDVEGRE) are enriched in basic and acidic residues. Residues 34–47 (RKRVKKRKGLKSGS) show a composition bias toward basic residues. Residues 48-68 (RHSDGSEAKQRKAALARDPRL) are compositionally biased toward basic and acidic residues. Residues 145–155 (EPEDDEEEIFE) show a composition bias toward acidic residues.

The protein belongs to the YihI family. In terms of assembly, interacts with Der.

Functionally, a GTPase-activating protein (GAP) that modifies Der/EngA GTPase function. May play a role in ribosome biogenesis. This is Der GTPase-activating protein YihI from Vibrio atlanticus (strain LGP32) (Vibrio splendidus (strain Mel32)).